The sequence spans 331 residues: Anthranilate phosphoribosyltransferase (331 aa).

5-phospho-alpha-D-ribose 1-diphosphate contacts are provided by residues Gly-79, Gly-82–Asp-83, Ser-87, Asn-89–Thr-92, Lys-107–Gly-115, and Ser-119. Gly-79 lines the anthranilate pocket. Mg(2+) is bound at residue Ser-91. Residue Asn-110 participates in anthranilate binding. An anthranilate-binding site is contributed by Arg-165. Residues Asp-223 and Glu-224 each coordinate Mg(2+).

It belongs to the anthranilate phosphoribosyltransferase family. As to quaternary structure, homodimer. It depends on Mg(2+) as a cofactor.

It carries out the reaction N-(5-phospho-beta-D-ribosyl)anthranilate + diphosphate = 5-phospho-alpha-D-ribose 1-diphosphate + anthranilate. It participates in amino-acid biosynthesis; L-tryptophan biosynthesis; L-tryptophan from chorismate: step 2/5. Its function is as follows. Catalyzes the transfer of the phosphoribosyl group of 5-phosphorylribose-1-pyrophosphate (PRPP) to anthranilate to yield N-(5'-phosphoribosyl)-anthranilate (PRA). This chain is Anthranilate phosphoribosyltransferase, found in Buchnera aphidicola subsp. Melaphis rhois.